Reading from the N-terminus, the 45-residue chain is Myotoxin-2 (45 aa).

Intrachain disulfides connect Cys4–Cys36, Cys11–Cys30, and Cys18–Cys37.

The protein belongs to the crotamine-myotoxin family. In terms of assembly, monomer. Expressed by the venom gland.

The protein resides in the secreted. Functionally, cationic peptide that possesses multiple functions. It acts as a cell-penetrating peptide (CPP), and as a potent voltage-gated potassium channel (Kv) inhibitor. It exhibits antimicrobial activities, hind limb paralysis, and severe muscle necrosis by a non-enzymatic mechanism. This chain is Myotoxin-2, found in Crotalus viridis viridis (Prairie rattlesnake).